We begin with the raw amino-acid sequence, 246 residues long: 4-hydroxy-tetrahydrodipicolinate reductase (246 aa).

Position 7–12 (7–12 (GCSGRM)) interacts with NAD(+). R34 is an NADP(+) binding site. Residues 76 to 78 (ATT) and 102 to 105 (CPNT) each bind NAD(+). Residue H135 is the Proton donor/acceptor of the active site. (S)-2,3,4,5-tetrahydrodipicolinate is bound at residue H136. K139 (proton donor) is an active-site residue. 145–146 (GT) provides a ligand contact to (S)-2,3,4,5-tetrahydrodipicolinate.

Belongs to the DapB family.

The protein localises to the cytoplasm. It carries out the reaction (S)-2,3,4,5-tetrahydrodipicolinate + NAD(+) + H2O = (2S,4S)-4-hydroxy-2,3,4,5-tetrahydrodipicolinate + NADH + H(+). The catalysed reaction is (S)-2,3,4,5-tetrahydrodipicolinate + NADP(+) + H2O = (2S,4S)-4-hydroxy-2,3,4,5-tetrahydrodipicolinate + NADPH + H(+). It participates in amino-acid biosynthesis; L-lysine biosynthesis via DAP pathway; (S)-tetrahydrodipicolinate from L-aspartate: step 4/4. Catalyzes the conversion of 4-hydroxy-tetrahydrodipicolinate (HTPA) to tetrahydrodipicolinate. This chain is 4-hydroxy-tetrahydrodipicolinate reductase, found in Chlamydia caviae (strain ATCC VR-813 / DSM 19441 / 03DC25 / GPIC) (Chlamydophila caviae).